The sequence spans 369 residues: MFRIYTAHSLGQKWVENYQECSAIFACIVGFTETGLIPGISAAGATPEARKYTAIADAEFLINGVQSSYHYPLPPLSQGVSPVFITRAVVEACNIPIYLFNAGLPTPPSVPYIDLKGKSANCLTTGKALPLPLVYELFQQGLKWGKKLAKDHTKNYLILSECVVGGTTTALSILTGLGINATEKVNSSHPHCNHKQKELIVKEGFKNAGYSYNLKPINPFELVAAVGDPMQIVVAGMAISASLKTGVMLAGGTQMLAVYALIKSIINTSKYQGNLDNIIVGTTRWVAEDLTGDTVTLAESIGTVPLFATQLNFSSSSYQQLQMYEQGYVKEGVGAGGCAIAASLSYNWTQEKLLNRIENLVNNYHRIRN.

This sequence belongs to the UPF0284 family.

This Crocosphaera subtropica (strain ATCC 51142 / BH68) (Cyanothece sp. (strain ATCC 51142)) protein is UPF0284 protein cce_1085.